A 704-amino-acid chain; its full sequence is Polyribonucleotide nucleotidyltransferase 4 (704 aa).

The Mg(2+) site is built by Asp-483 and Asp-489. Residues 550–609 form the KH domain; it reads PRVLKMKIHPDKIRDVIGSGGKTINRIIDETGVKIDIDNDGTIFIAAESQEAVEKAIIII. Positions 619–687 constitute an S1 motif domain; it reads GQNYTGKVIK…QQGKINLSRK (69 aa).

It belongs to the polyribonucleotide nucleotidyltransferase family. It depends on Mg(2+) as a cofactor.

It localises to the cytoplasm. It carries out the reaction RNA(n+1) + phosphate = RNA(n) + a ribonucleoside 5'-diphosphate. Functionally, involved in mRNA degradation. Catalyzes the phosphorolysis of single-stranded polyribonucleotides processively in the 3'- to 5'-direction. In Alkaliphilus metalliredigens (strain QYMF), this protein is Polyribonucleotide nucleotidyltransferase 4.